We begin with the raw amino-acid sequence, 253 residues long: Hydroxypyruvate/pyruvate aldolase (253 aa).

The active-site Proton acceptor is His-48. Residues Glu-151 and Asp-177 each contribute to the a divalent metal cation site.

It belongs to the HpcH/HpaI aldolase family. Requires a divalent metal cation as cofactor.

The catalysed reaction is D-glyceraldehyde + pyruvate = 2-dehydro-3-deoxy-L-galactonate. In terms of biological role, aldolase which can catalyze in vitro the aldolisation reaction between hydroxypyruvate (HPA) or pyruvate (PA) and D-glyceraldehyde (D-GA). The condensation of pyruvate and D-glyceraldehyde produces 2-dehydro-3-deoxy-L-galactonate. Has weak activity with hydroxypyruvate and D-glyceraldehyde. This is Hydroxypyruvate/pyruvate aldolase from Sagittula stellata (strain ATCC 700073 / DSM 11524 / E-37).